We begin with the raw amino-acid sequence, 225 residues long: Octanoyltransferase (225 aa).

The BPL/LPL catalytic domain occupies 42–219 (KNRQASMIFC…SICSALEYIN (178 aa)). Residues 79-86 (RGGKITWH), 149-151 (AIG), and 162-164 (GFA) each bind substrate. C180 (acyl-thioester intermediate) is an active-site residue.

Belongs to the LipB family.

Its subcellular location is the cytoplasm. The catalysed reaction is octanoyl-[ACP] + L-lysyl-[protein] = N(6)-octanoyl-L-lysyl-[protein] + holo-[ACP] + H(+). Its pathway is protein modification; protein lipoylation via endogenous pathway; protein N(6)-(lipoyl)lysine from octanoyl-[acyl-carrier-protein]: step 1/2. In terms of biological role, catalyzes the transfer of endogenously produced octanoic acid from octanoyl-acyl-carrier-protein onto the lipoyl domains of lipoate-dependent enzymes. Lipoyl-ACP can also act as a substrate although octanoyl-ACP is likely to be the physiological substrate. The protein is Octanoyltransferase of Tropheryma whipplei (strain TW08/27) (Whipple's bacillus).